A 60-amino-acid chain; its full sequence is Putative transcriptional regulator XtpA (60 aa).

Controls the expression of small non-coding RNA GcvB, which represses the expression of many amino acid transporter proteins and uptake of aminoglycoside antibiotics in cells. Might be a transcriptional activator. An RNA (xtr) with a tRNA-like fold possibly derived from tRNA-Arg(UCG) is encoded entirely within the protein; xtr does not have the sequence corresponding to tRNA anticodon or variable arms. 10 synonymous codon changes in the xtr region of xtpA have the same phenotype as a deletion mutation, suggesting the mRNA secondary structure is important for function. This chain is Putative transcriptional regulator XtpA, found in Escherichia coli (strain K12).